The primary structure comprises 433 residues: Xylose isomerase (433 aa).

Catalysis depends on residues histidine 99 and aspartate 102. Mg(2+) contacts are provided by glutamate 230, glutamate 266, histidine 269, aspartate 294, aspartate 305, aspartate 307, and aspartate 337.

It belongs to the xylose isomerase family. In terms of assembly, homotetramer. Mg(2+) serves as cofactor.

It is found in the cytoplasm. The enzyme catalyses alpha-D-xylose = alpha-D-xylulofuranose. The sequence is that of Xylose isomerase from Cereibacter sphaeroides (strain ATCC 17023 / DSM 158 / JCM 6121 / CCUG 31486 / LMG 2827 / NBRC 12203 / NCIMB 8253 / ATH 2.4.1.) (Rhodobacter sphaeroides).